A 264-amino-acid polypeptide reads, in one-letter code: Low molecular mass lipoprotein PBMHPC-23 (264 aa).

Residues 1–23 (MKFLVVFAVVRACVTPACAEMSA) form the signal peptide.

It belongs to the 30 kDa lipoprotein family.

Its subcellular location is the secreted. This is Low molecular mass lipoprotein PBMHPC-23 from Bombyx mori (Silk moth).